Reading from the N-terminus, the 181-residue chain is CDP-diacylglycerol--glycerol-3-phosphate 3-phosphatidyltransferase (181 aa).

Helical transmembrane passes span 8-28 (PNYL…TFYI), 35-55 (MLGA…GYIA), 64-84 (FGKM…IIML), and 148-168 (IIYL…LTII).

This sequence belongs to the CDP-alcohol phosphatidyltransferase class-I family.

It localises to the cell membrane. It carries out the reaction a CDP-1,2-diacyl-sn-glycerol + sn-glycerol 3-phosphate = a 1,2-diacyl-sn-glycero-3-phospho-(1'-sn-glycero-3'-phosphate) + CMP + H(+). Its pathway is phospholipid metabolism; phosphatidylglycerol biosynthesis; phosphatidylglycerol from CDP-diacylglycerol: step 1/2. Its function is as follows. This protein catalyzes the committed step to the synthesis of the acidic phospholipids. The polypeptide is CDP-diacylglycerol--glycerol-3-phosphate 3-phosphatidyltransferase (pgsA) (Rickettsia bellii (strain RML369-C)).